A 117-amino-acid polypeptide reads, in one-letter code: Larval cuticle protein A2B (117 aa).

Copy 1 of the repeat occupies 12–15; it reads AAPV. The Chitin-binding type R&amp;R domain maps to 29-95; the sequence is HPQYQYGYDV…AVVHREPLVA (67 aa). Residues 108–111 form repeat 2; sequence AAPV.

Component of the cuticle of the larva of Tenebrio molitor. The protein is Larval cuticle protein A2B of Tenebrio molitor (Yellow mealworm beetle).